A 485-amino-acid polypeptide reads, in one-letter code: Glutamyl-tRNA(Gln) amidotransferase subunit A (485 aa).

Residues lysine 78 and serine 153 each act as charge relay system in the active site. Serine 177 (acyl-ester intermediate) is an active-site residue.

The protein belongs to the amidase family. GatA subfamily. Heterotrimer of A, B and C subunits.

The enzyme catalyses L-glutamyl-tRNA(Gln) + L-glutamine + ATP + H2O = L-glutaminyl-tRNA(Gln) + L-glutamate + ADP + phosphate + H(+). Allows the formation of correctly charged Gln-tRNA(Gln) through the transamidation of misacylated Glu-tRNA(Gln) in organisms which lack glutaminyl-tRNA synthetase. The reaction takes place in the presence of glutamine and ATP through an activated gamma-phospho-Glu-tRNA(Gln). The sequence is that of Glutamyl-tRNA(Gln) amidotransferase subunit A from Geobacter sp. (strain M21).